Consider the following 412-residue polypeptide: Peptidase T (412 aa).

His-81 contacts Zn(2+). Asp-83 is an active-site residue. Asp-144 provides a ligand contact to Zn(2+). Glu-178 (proton acceptor) is an active-site residue. Zn(2+) is bound by residues Glu-179, Asp-201, and His-383.

It belongs to the peptidase M20B family. It depends on Zn(2+) as a cofactor.

The protein resides in the cytoplasm. It carries out the reaction Release of the N-terminal residue from a tripeptide.. Its function is as follows. Cleaves the N-terminal amino acid of tripeptides. The sequence is that of Peptidase T from Bacillus cereus (strain ATCC 14579 / DSM 31 / CCUG 7414 / JCM 2152 / NBRC 15305 / NCIMB 9373 / NCTC 2599 / NRRL B-3711).